A 1589-amino-acid chain; its full sequence is Paternally-expressed gene 3 protein (1589 aa).

The region spanning 46–128 (HQRFRNLIYV…TLLENYKEMY (83 aa)) is the SCAN box domain. Disordered regions lie at residues 128 to 230 (YQPE…ESYQ), 266 to 306 (DGHS…RRGI), and 319 to 349 (KFIKDVSRSSKSGRARESSDRSQRFPRMSDD). Acidic residues predominate over residues 129-142 (QPEDDNNSDVTSDD). 4 stretches are compositionally biased toward basic and acidic residues: residues 143–152 (DMTRNRRESS), 161–182 (SGDRDWDRRGRSRDMEPRDRWS), 206–225 (FEMDRDDDRDSRAYESRSQD), and 295–306 (PEAKKSTHRRGI). 3 C2H2-type zinc fingers span residues 454–476 (YVCDECGRSFSVISEFVEHQIMH), 507–529 (FECKDCGETFNKSAALAEHRKIH), and 565–587 (YECRVCKETFLHSSALIEHQKIH). Residues 588-607 (FGDDKDNEREHERERERGET) are compositionally biased toward basic and acidic residues. The disordered stretch occupies residues 588–610 (FGDDKDNEREHERERERGETFRP). Residues 627–649 (YECKVCGETFLHSSSLKEHQKIH) form a C2H2-type 4 zinc finger. Residues 838–930 (LVASKPPRSH…EFSVPSSNVR (93 aa)) are disordered. Residues 868–881 (LNDKRQKIPARENP) show a composition bias toward basic and acidic residues. Residues 969–991 (YECQECGECFAHSSDLTEHQKIH) form a C2H2-type 5 zinc finger. Residues 1056–1104 (EKSHGEESQGENTDGEETHSEETHGQETIEDPVIQSSDMEDPQKDDPDD) form a disordered region. A compositionally biased stretch (basic and acidic residues) spans 1071–1082 (EETHSEETHGQE). 5 consecutive C2H2-type zinc fingers follow at residues 1107–1129 (YECEDCGLGFVDLTDLTDHQKVH), 1163–1185 (YECPKCGESFIHSSFLFEHQRIH), 1225–1247 (IRCLLCGQGFIHSSALNEHMRLH), 1282–1304 (FECAVCGESFVNPAELADHVTVH), and 1332–1354 (YECKDCGKSFIHSTVLTKHKELH). Residues 1396 to 1416 (AEPEVEAAEPEVEAAEPEVEA) are compositionally biased toward acidic residues. Positions 1396 to 1496 (AEPEVEAAEP…GIEDPEEGED (101 aa)) are disordered. 7 tandem repeats follow at residues 1398-1404 (PEVEAAE), 1405-1411 (PEVEAAE), 1412-1418 (PEVEAAE), 1419-1423 (PNGEA), 1426-1430 (PDGEA), 1433-1437 (PIGEA), and 1440-1444 (PNGEA). The segment at 1398–1418 (PEVEAAEPEVEAAEPEVEAAE) is 3 X 7 AA repeat of P-E-V-E-A-A-E. The 4 X 5 AA repeat of P-X-G-E-A stretch occupies residues 1419–1444 (PNGEAEGPDGEAAEPIGEAGQPNGEA). 2 stretches are compositionally biased toward acidic residues: residues 1450–1467 (DADEPDGAGIEDPEERAE) and 1476–1496 (PEGDADEPDGVGIEDPEEGED). 2 consecutive C2H2-type zinc fingers follow at residues 1506-1528 (YDCHECTETFTSSTAFGEHLKTH) and 1565-1587 (FKCDVCGQLFNDRLSLARHQNTH).

It belongs to the krueppel C2H2-type zinc-finger protein family. Homodimer. Interacts with SIAH1A and SIAH2. Interacts with TRAF2.

The protein resides in the nucleus. The protein localises to the cytoplasm. In terms of biological role, induces apoptosis in cooperation with SIAH1A. Acts as a mediator between p53/TP53 and BAX in a neuronal death pathway that is activated by DNA damage. Acts synergistically with TRAF2 and inhibits TNF induced apoptosis through activation of NF-kappa-B. This is Paternally-expressed gene 3 protein (PEG3) from Gorilla gorilla gorilla (Western lowland gorilla).